Here is a 513-residue protein sequence, read N- to C-terminus: ATP synthase subunit alpha (513 aa).

169-176 (GDRQTGKT) lines the ATP pocket.

It belongs to the ATPase alpha/beta chains family. F-type ATPases have 2 components, CF(1) - the catalytic core - and CF(0) - the membrane proton channel. CF(1) has five subunits: alpha(3), beta(3), gamma(1), delta(1), epsilon(1). CF(0) has three main subunits: a(1), b(2) and c(9-12). The alpha and beta chains form an alternating ring which encloses part of the gamma chain. CF(1) is attached to CF(0) by a central stalk formed by the gamma and epsilon chains, while a peripheral stalk is formed by the delta and b chains.

The protein localises to the cell inner membrane. It carries out the reaction ATP + H2O + 4 H(+)(in) = ADP + phosphate + 5 H(+)(out). Its function is as follows. Produces ATP from ADP in the presence of a proton gradient across the membrane. The alpha chain is a regulatory subunit. In Bordetella petrii (strain ATCC BAA-461 / DSM 12804 / CCUG 43448), this protein is ATP synthase subunit alpha.